The primary structure comprises 148 residues: Protein SprT-like (148 aa).

Residues 6 to 147 (LQQLVATISM…CGRCQGPIKL (142 aa)) form the SprT-like domain. Histidine 67 is a binding site for Zn(2+). The active site involves glutamate 68. Zn(2+) is bound at residue histidine 71.

It belongs to the SprT family. Zn(2+) is required as a cofactor.

Its subcellular location is the cytoplasm. This chain is Protein SprT-like, found in Lactiplantibacillus plantarum (strain ATCC BAA-793 / NCIMB 8826 / WCFS1) (Lactobacillus plantarum).